The primary structure comprises 271 residues: 3-methyl-2-oxobutanoate hydroxymethyltransferase (271 aa).

Residues D51 and D90 each coordinate Mg(2+). 3-methyl-2-oxobutanoate is bound by residues 51–52 (DS), D90, and K118. E120 contributes to the Mg(2+) binding site. E186 functions as the Proton acceptor in the catalytic mechanism.

Belongs to the PanB family. Homodecamer; pentamer of dimers. The cofactor is Mg(2+).

Its subcellular location is the cytoplasm. It carries out the reaction 3-methyl-2-oxobutanoate + (6R)-5,10-methylene-5,6,7,8-tetrahydrofolate + H2O = 2-dehydropantoate + (6S)-5,6,7,8-tetrahydrofolate. Its pathway is cofactor biosynthesis; (R)-pantothenate biosynthesis; (R)-pantoate from 3-methyl-2-oxobutanoate: step 1/2. In terms of biological role, catalyzes the reversible reaction in which hydroxymethyl group from 5,10-methylenetetrahydrofolate is transferred onto alpha-ketoisovalerate to form ketopantoate. The sequence is that of 3-methyl-2-oxobutanoate hydroxymethyltransferase from Stenotrophomonas maltophilia (strain R551-3).